The following is a 602-amino-acid chain: uncharacterized protein (602 aa).

Belongs to the glycosyltransferase 2 family.

This is an uncharacterized protein from Rickettsia felis (strain ATCC VR-1525 / URRWXCal2) (Rickettsia azadi).